The following is a 462-amino-acid chain: tRNA(Ile)-lysidine synthase (462 aa).

ATP is bound at residue 31–36 (SGGRDS).

Belongs to the tRNA(Ile)-lysidine synthase family.

It localises to the cytoplasm. It carries out the reaction cytidine(34) in tRNA(Ile2) + L-lysine + ATP = lysidine(34) in tRNA(Ile2) + AMP + diphosphate + H(+). Ligates lysine onto the cytidine present at position 34 of the AUA codon-specific tRNA(Ile) that contains the anticodon CAU, in an ATP-dependent manner. Cytidine is converted to lysidine, thus changing the amino acid specificity of the tRNA from methionine to isoleucine. In Ralstonia nicotianae (strain ATCC BAA-1114 / GMI1000) (Ralstonia solanacearum), this protein is tRNA(Ile)-lysidine synthase.